The primary structure comprises 662 residues: Protein Aster-C (662 aa).

The segment at methionine 1–valine 34 is disordered. A GRAM domain is found at glutamate 69–lysine 136. Disordered stretches follow at residues serine 212 to serine 237 and valine 250 to leucine 284. Over residues leucine 265 to threonine 276 the composition is skewed to basic and acidic residues. One can recognise a VASt domain in the interval histidine 326–asparagine 497. A helical membrane pass occupies residues leucine 557–leucine 577.

It localises to the endoplasmic reticulum membrane. It is found in the cell membrane. Functionally, cholesterol transporter that mediates non-vesicular transport of cholesterol from the plasma membrane (PM) to the endoplasmic reticulum (ER). Contains unique domains for binding cholesterol and the PM, thereby serving as a molecular bridge for the transfer of cholesterol from the PM to the ER. Plays a crucial role in cholesterol homeostasis and has the unique ability to localize to the PM based on the level of membrane cholesterol. In lipid-poor conditions localizes to the ER membrane and in response to excess cholesterol in the PM is recruited to the endoplasmic reticulum-plasma membrane contact sites (EPCS) which is mediated by the GRAM domain. At the EPCS, the sterol-binding VASt/ASTER domain binds to the cholesterol in the PM and facilitates its transfer from the PM to ER. The protein is Protein Aster-C (GRAMD1C) of Pongo abelii (Sumatran orangutan).